A 558-amino-acid polypeptide reads, in one-letter code: Podocalyxin (558 aa).

Positions 1–22 are cleaved as a signal peptide; sequence MRCALALSALLLLLSTPPLLPS. The segment covering 20-29 has biased composition (pro residues); it reads LPSSPSPSPS. 3 disordered regions span residues 20-50, 83-210, and 270-338; these read LPSS…PTPA, LGVS…DHLM, and SVIS…VAHE. Topologically, residues 23–461 are extracellular; that stretch reads SPSPSPSPSQ…EEAEDRFSMP (439 aa). Polar residues-rich tracts occupy residues 32–50 and 83–107; these read QNAT…PTPA and LGVS…NTTV. Residues Asn33, Asn43, and Asn104 are each glycosylated (N-linked (GlcNAc...) asparagine). A compositionally biased stretch (low complexity) spans 125-142; sequence STKSADTTTVATSTATAK. Polar residues-rich tracts occupy residues 143 to 173, 190 to 204, and 270 to 302; these read PNTT…LTST, RQPT…PTSS, and SVIS…TSPA. Asn144 is a glycosylation site (N-linked (GlcNAc...) asparagine). A compositionally biased stretch (low complexity) spans 313–324; the sequence is TMSSSPTAASTT. An N-linked (GlcNAc...) asparagine glycan is attached at Asn360. A helical transmembrane segment spans residues 462–482; it reads LIITIVCMASFLLLVAALYGC. Residues 483 to 558 lie on the Cytoplasmic side of the membrane; that stretch reads CHQRLSQRKD…DLDEEEDTHL (76 aa). Thr518 bears the Phosphothreonine mark. Ser529 and Ser537 each carry phosphoserine. A Phosphothreonine modification is found at Thr556.

Belongs to the podocalyxin family. As to quaternary structure, monomer; when associated with the membrane raft. Oligomer; when integrated in the apical membrane. Interacts (via the C-terminal PDZ-binding motif DTHL) with NHERF1 (via the PDZ domains); the interaction is not detected in glomerular epithelium cells, take place early in the secretory pathway and is necessary for its apical membrane sorting. Found in a complex with EZR, PODXL and NHERF2. Associates with the actin cytoskeleton through complex formation with EZR and NHERF2. Interacts (via the C-terminal PDZ-binding motif DTHL) with NHERF2 (via the PDZ 1 domain); interaction is detected in glomerular epithelium cells. Interacts with EZR. Post-translationally, N- and O-linked glycosylated. Sialoglycoprotein. Glomerular epithelium cell (podocyte).

It localises to the apical cell membrane. The protein localises to the cell projection. It is found in the lamellipodium. The protein resides in the filopodium. Its subcellular location is the ruffle. It localises to the microvillus. The protein localises to the membrane raft. It is found in the membrane. Involved in the regulation of both adhesion and cell morphology and cancer progression. Functions as an anti-adhesive molecule that maintains an open filtration pathway between neighboring foot processes in the podocyte by charge repulsion. Acts as a pro-adhesive molecule, enhancing the adherence of cells to immobilized ligands, increasing the rate of migration and cell-cell contacts in an integrin-dependent manner. Induces the formation of apical actin-dependent microvilli. Involved in the formation of a preapical plasma membrane subdomain to set up initial epithelial polarization and the apical lumen formation during renal tubulogenesis. Plays a role in cancer development and aggressiveness by inducing cell migration and invasion through its interaction with the actin-binding protein EZR. Affects EZR-dependent signaling events, leading to increased activities of the MAPK and PI3K pathways in cancer cells. The chain is Podocalyxin (PODXL) from Homo sapiens (Human).